The following is a 318-amino-acid chain: Putative S-adenosyl-L-methionine-dependent methyltransferase MMAR_1595 (318 aa).

Residues Glu-132 and 161-162 (DL) each bind S-adenosyl-L-methionine.

It belongs to the UPF0677 family.

Functionally, exhibits S-adenosyl-L-methionine-dependent methyltransferase activity. This chain is Putative S-adenosyl-L-methionine-dependent methyltransferase MMAR_1595, found in Mycobacterium marinum (strain ATCC BAA-535 / M).